Consider the following 130-residue polypeptide: Ribosome-binding factor A (130 aa).

This sequence belongs to the RbfA family. Monomer. Binds 30S ribosomal subunits, but not 50S ribosomal subunits or 70S ribosomes.

The protein localises to the cytoplasm. In terms of biological role, one of several proteins that assist in the late maturation steps of the functional core of the 30S ribosomal subunit. Associates with free 30S ribosomal subunits (but not with 30S subunits that are part of 70S ribosomes or polysomes). Required for efficient processing of 16S rRNA. May interact with the 5'-terminal helix region of 16S rRNA. The chain is Ribosome-binding factor A from Prochlorococcus marinus (strain MIT 9312).